A 902-amino-acid polypeptide reads, in one-letter code: Glutamate receptor 4 (902 aa).

The signal sequence occupies residues 1–20 (MRIICRQIVLLFSGFWGLAM). Residues 22-544 (AFPSSVQIGG…GVFSFLDPLA (523 aa)) are Extracellular-facing. N-linked (GlcNAc...) asparagine glycosylation is found at N52, N56, N258, N371, N407, and N414. Cysteines 84 and 331 form a disulfide. L-glutamate-binding residues include P500, T502, and R507. Residues 545 to 565 (YEIWMCIVFAYIGVSVVLFLV) form a helical membrane-spanning segment. At 566-592 (SRFSPYEWHTEEPEDGKEGPSDQPPNE) the chain is on the cytoplasmic side. Residues 593-608 (FGIFNSLWFSLGAFMQ) constitute an intramembrane region (helical; Pore-forming). Residues 609-611 (QGC) lie within the membrane without spanning it. C611 carries S-palmitoyl cysteine lipidation. At 612–617 (DISPRS) the chain is on the cytoplasmic side. Residues 618–638 (LSGRIVGGVWWFFTLIIISSY) form a helical membrane-spanning segment. The Extracellular portion of the chain corresponds to 639 to 813 (TANLAAFLTV…DKTSALSLSN (175 aa)). S676, T677, and E727 together coordinate L-glutamate. Residues C740 and C795 are joined by a disulfide bond. Residues 814–834 (VAGVFYILVGGLGLAMLVALI) traverse the membrane as a helical segment. Over 835 to 902 (EFCYKSRAEA…GLAVIASDLP (68 aa)) the chain is Cytoplasmic. C837 carries S-palmitoyl cysteine lipidation. S862 is subject to Phosphoserine; by PKC/PRKCG.

This sequence belongs to the glutamate-gated ion channel (TC 1.A.10.1) family. GRIA4 subfamily. In terms of assembly, homotetramer or heterotetramer of pore-forming glutamate receptor subunits. Tetramers may be formed by the dimerization of dimers. Interacts with EPB41L1 via its C-terminus. Isoform 3 interacts with PICK1. Found in a complex with GRIA1, GRIA2, GRIA3, CNIH2, CNIH3, CACNG2, CACNG3, CACNG4, CACNG5, CACNG7 and CACNG8. Interacts with CACNG5 and PRKCG. Found in a complex with GRIA1, GRIA2, GRIA3, DLG4, CACNG8 and CNIH2. Post-translationally, palmitoylated. Depalmitoylated upon L-glutamate stimulation. ZDHHC3/GODZ specifically palmitoylates Cys-611, which leads to Golgi retention and decreased cell surface expression. In contrast, Cys-837 palmitoylation does not affect cell surface expression but regulates stimulation-dependent endocytosis. Phosphorylated at Ser-862 by PRKCG; phosphorylation increases plasma membrane-associated GRI4 expression. Detected in cerebellum.

The protein localises to the cell membrane. It localises to the postsynaptic cell membrane. Its subcellular location is the cell projection. The protein resides in the dendrite. The catalysed reaction is Ca(2+)(in) = Ca(2+)(out). It carries out the reaction Na(+)(in) = Na(+)(out). It catalyses the reaction Mg(2+)(in) = Mg(2+)(out). Functionally, ionotropic glutamate receptor that functions as a ligand-gated cation channel, gated by L-glutamate and glutamatergic agonists such as alpha-amino-3-hydroxy-5-methyl-4-isoxazolepropionic acid (AMPA), quisqualic acid, and kainic acid. L-glutamate acts as an excitatory neurotransmitter at many synapses in the central nervous system and plays an important role in fast excitatory synaptic transmission. Binding of the excitatory neurotransmitter L-glutamate induces a conformation change, leading to the opening of the cation channel, and thereby converts the chemical signal to an electrical impulse upon entry of monovalent and divalent cations such as sodium and calcium. The receptor then desensitizes rapidly and enters a transient inactive state, characterized by the presence of bound agonist. In the presence of CACNG8, shows resensitization which is characterized by a delayed accumulation of current flux upon continued application of L-glutamate. This chain is Glutamate receptor 4, found in Rattus norvegicus (Rat).